The chain runs to 660 residues: Acetyl-coenzyme A synthetase (660 aa).

CoA is bound by residues 197 to 200 (RGGK) and Thr-317. ATP-binding positions include 397–399 (GEP), 421–426 (DTWWQT), Asp-512, and Arg-528. Ser-536 lines the CoA pocket. Arg-539 serves as a coordination point for ATP. Residues Val-550 and Val-555 each coordinate Mg(2+). Lys-625 bears the N6-acetyllysine mark.

The protein belongs to the ATP-dependent AMP-binding enzyme family. The cofactor is Mg(2+). In terms of processing, acetylated. Deacetylation by the SIR2-homolog deacetylase activates the enzyme.

It carries out the reaction acetate + ATP + CoA = acetyl-CoA + AMP + diphosphate. In terms of biological role, catalyzes the conversion of acetate into acetyl-CoA (AcCoA), an essential intermediate at the junction of anabolic and catabolic pathways. AcsA undergoes a two-step reaction. In the first half reaction, AcsA combines acetate with ATP to form acetyl-adenylate (AcAMP) intermediate. In the second half reaction, it can then transfer the acetyl group from AcAMP to the sulfhydryl group of CoA, forming the product AcCoA. In Paraburkholderia phymatum (strain DSM 17167 / CIP 108236 / LMG 21445 / STM815) (Burkholderia phymatum), this protein is Acetyl-coenzyme A synthetase.